The primary structure comprises 144 residues: Large ribosomal subunit protein uL15 (144 aa).

The tract at residues 1-56 (MELNNLKPAAGAKHAKRRVGRGIGSGLGKTAGRGHKGQKSRSGGFHKVGFEGGQMP) is disordered. A compositionally biased stretch (gly residues) spans 21-31 (RGIGSGLGKTA).

Belongs to the universal ribosomal protein uL15 family. Part of the 50S ribosomal subunit.

In terms of biological role, binds to the 23S rRNA. The chain is Large ribosomal subunit protein uL15 from Burkholderia cenocepacia (strain HI2424).